We begin with the raw amino-acid sequence, 348 residues long: Nicotinate-nucleotide--dimethylbenzimidazole phosphoribosyltransferase (348 aa).

E316 serves as the catalytic Proton acceptor.

This sequence belongs to the CobT family.

It carries out the reaction 5,6-dimethylbenzimidazole + nicotinate beta-D-ribonucleotide = alpha-ribazole 5'-phosphate + nicotinate + H(+). The protein operates within nucleoside biosynthesis; alpha-ribazole biosynthesis; alpha-ribazole from 5,6-dimethylbenzimidazole: step 1/2. Functionally, catalyzes the synthesis of alpha-ribazole-5'-phosphate from nicotinate mononucleotide (NAMN) and 5,6-dimethylbenzimidazole (DMB). This chain is Nicotinate-nucleotide--dimethylbenzimidazole phosphoribosyltransferase, found in Xanthomonas campestris pv. campestris (strain 8004).